The chain runs to 388 residues: Na(+)/H(+) antiporter NhaA (388 aa).

A run of 12 helical transmembrane segments spans residues 13 to 33 (AAGG…ANTP), 36 to 56 (GIYH…LEIA), 59 to 79 (LLLW…GLEV), 95 to 115 (VFPA…YLMF), 125 to 145 (GWAI…ALLG), 154 to 174 (VFLL…IALF), 179 to 199 (VSMA…FMNW), 213 to 233 (LVLW…GVII), 259 to 279 (VAFL…LQGV), 287 to 307 (LLPV…IFTF), 328 to 348 (VFAV…IASL), and 363 to 383 (LGIL…LRMS).

Belongs to the NhaA Na(+)/H(+) (TC 2.A.33) antiporter family.

The protein resides in the cell inner membrane. It carries out the reaction Na(+)(in) + 2 H(+)(out) = Na(+)(out) + 2 H(+)(in). Its function is as follows. Na(+)/H(+) antiporter that extrudes sodium in exchange for external protons. This Serratia proteamaculans (strain 568) protein is Na(+)/H(+) antiporter NhaA.